The chain runs to 208 residues: Small ribosomal subunit protein eS8 (208 aa).

The disordered stretch occupies residues 1–34 (MGISRDHWHKRRATGGKRAPIRKKRKYELGRPAA). Over residues 7 to 26 (HWHKRRATGGKRAPIRKKRK) the composition is skewed to basic residues.

Belongs to the eukaryotic ribosomal protein eS8 family. As to quaternary structure, component of the small ribosomal subunit. Identified in a IGF2BP1-dependent mRNP granule complex containing untranslated mRNAs. Part of the small subunit (SSU) processome, composed of more than 70 proteins and the RNA chaperone small nucleolar RNA (snoRNA) U3.

It is found in the cytoplasm. It localises to the membrane. Its subcellular location is the nucleus. The protein localises to the nucleolus. Functionally, component of the small ribosomal subunit. The ribosome is a large ribonucleoprotein complex responsible for the synthesis of proteins in the cell. Part of the small subunit (SSU) processome, first precursor of the small eukaryotic ribosomal subunit. During the assembly of the SSU processome in the nucleolus, many ribosome biogenesis factors, an RNA chaperone and ribosomal proteins associate with the nascent pre-rRNA and work in concert to generate RNA folding, modifications, rearrangements and cleavage as well as targeted degradation of pre-ribosomal RNA by the RNA exosome. This chain is Small ribosomal subunit protein eS8 (RpS8), found in Spodoptera frugiperda (Fall armyworm).